A 364-amino-acid polypeptide reads, in one-letter code: Fructose-bisphosphate aldolase A (364 aa).

Phosphotyrosine is present on tyrosine 5. The residue at position 9 (threonine 9) is a Phosphothreonine. Phosphoserine occurs at positions 36 and 39. Lysine 42 carries the N6-acetyllysine; alternate modification. Residue lysine 42 forms a Glycyl lysine isopeptide (Lys-Gly) (interchain with G-Cter in SUMO1); alternate linkage. Residue lysine 42 forms a Glycyl lysine isopeptide (Lys-Gly) (interchain with G-Cter in SUMO2); alternate linkage. Residue arginine 43 participates in beta-D-fructose 1,6-bisphosphate binding. Serine 46 is modified (phosphoserine). Lysine 99 is modified (N6-(2-hydroxyisobutyryl)lysine). N6-acetyllysine is present on lysine 108. The residue at position 111 (lysine 111) is an N6-acetyllysine; alternate. Lysine 111 is subject to N6-malonyllysine; alternate. Serine 132 carries the phosphoserine modification. Position 147 is an N6-(2-hydroxyisobutyryl)lysine (lysine 147). The active-site Proton acceptor is the glutamate 188. Lysine 230 (schiff-base intermediate with dihydroxyacetone-P) is an active-site residue. Serine 272 carries the phosphoserine modification. Residues 272–274 (SGG), serine 301, and arginine 304 each bind beta-D-fructose 1,6-bisphosphate. At lysine 312 the chain carries N6-malonyllysine. Lysine 330 carries the N6-acetyllysine modification.

Belongs to the class I fructose-bisphosphate aldolase family. Homotetramer. Interacts with SNX9 and WAS. Interacts with FBP2; the interaction blocks FBP2 inhibition by physiological concentrations of AMP and reduces inhibition by Ca(2+). In terms of tissue distribution, expressed in muscle, brain and hepatoma cells.

It localises to the cytoplasm. It is found in the myofibril. Its subcellular location is the sarcomere. The protein resides in the i band. The protein localises to the m line. The enzyme catalyses beta-D-fructose 1,6-bisphosphate = D-glyceraldehyde 3-phosphate + dihydroxyacetone phosphate. The protein operates within carbohydrate degradation; glycolysis; D-glyceraldehyde 3-phosphate and glycerone phosphate from D-glucose: step 4/4. Its function is as follows. Catalyzes the reversible conversion of beta-D-fructose 1,6-bisphosphate (FBP) into two triose phosphate and plays a key role in glycolysis and gluconeogenesis. In addition, may also function as scaffolding protein. The chain is Fructose-bisphosphate aldolase A (Aldoa) from Rattus norvegicus (Rat).